The sequence spans 173 residues: Bifunctional protein PyrR (173 aa).

The PRPP-binding signature appears at 93 to 105; sequence VILIDDVLYTGRT.

It belongs to the purine/pyrimidine phosphoribosyltransferase family. PyrR subfamily. Homodimer and homohexamer; in equilibrium.

It catalyses the reaction UMP + diphosphate = 5-phospho-alpha-D-ribose 1-diphosphate + uracil. Regulates transcriptional attenuation of the pyrimidine nucleotide (pyr) operon by binding in a uridine-dependent manner to specific sites on pyr mRNA. This disrupts an antiterminator hairpin in the RNA and favors formation of a downstream transcription terminator, leading to a reduced expression of downstream genes. In terms of biological role, also displays a weak uracil phosphoribosyltransferase activity which is not physiologically significant. This chain is Bifunctional protein PyrR, found in Streptococcus pyogenes serotype M12 (strain MGAS2096).